A 441-amino-acid polypeptide reads, in one-letter code: Serine--tRNA ligase (441 aa).

Position 250–252 (250–252 (TSE)) interacts with L-serine. Residues 281–283 (RRE) and Val297 each bind ATP. Glu304 contacts L-serine. 368-371 (EIVS) is an ATP binding site. An L-serine-binding site is contributed by Thr402.

The protein belongs to the class-II aminoacyl-tRNA synthetase family. Type-1 seryl-tRNA synthetase subfamily. Homodimer. The tRNA molecule binds across the dimer.

It is found in the cytoplasm. It catalyses the reaction tRNA(Ser) + L-serine + ATP = L-seryl-tRNA(Ser) + AMP + diphosphate + H(+). The enzyme catalyses tRNA(Sec) + L-serine + ATP = L-seryl-tRNA(Sec) + AMP + diphosphate + H(+). It functions in the pathway aminoacyl-tRNA biosynthesis; selenocysteinyl-tRNA(Sec) biosynthesis; L-seryl-tRNA(Sec) from L-serine and tRNA(Sec): step 1/1. In terms of biological role, catalyzes the attachment of serine to tRNA(Ser). Is also able to aminoacylate tRNA(Sec) with serine, to form the misacylated tRNA L-seryl-tRNA(Sec), which will be further converted into selenocysteinyl-tRNA(Sec). This chain is Serine--tRNA ligase, found in Thermoplasma acidophilum (strain ATCC 25905 / DSM 1728 / JCM 9062 / NBRC 15155 / AMRC-C165).